A 70-amino-acid polypeptide reads, in one-letter code: Protein SlyX homolog (70 aa).

This sequence belongs to the SlyX family.

This is Protein SlyX homolog from Shewanella putrefaciens (strain CN-32 / ATCC BAA-453).